A 51-amino-acid polypeptide reads, in one-letter code: Ribosome biogenesis protein Nop10 (51 aa).

Belongs to the NOP10 family.

Its function is as follows. Involved in ribosome biogenesis; more specifically in 18S rRNA pseudouridylation and in cleavage of pre-rRNA. The protein is Ribosome biogenesis protein Nop10 of Methanococcus maripaludis (strain C6 / ATCC BAA-1332).